The sequence spans 149 residues: Large ribosomal subunit protein bL20m (149 aa).

A mitochondrion-targeting transit peptide spans 1 to 9 (MVFLSAPLW).

This sequence belongs to the bacterial ribosomal protein bL20 family. In terms of assembly, component of the mitochondrial ribosome large subunit (39S) which comprises a 16S rRNA and about 50 distinct proteins. Interacts with OXA1L.

It localises to the mitochondrion. This chain is Large ribosomal subunit protein bL20m (MRPL20), found in Bos taurus (Bovine).